Reading from the N-terminus, the 332-residue chain is Sesquiterpene synthase MBR_10393 (332 aa).

Residues D91 and D96 each coordinate Mg(2+). The short motif at 91 to 96 (DDLFVD) is the DDXXXD motif element. Position 184 (R184) interacts with substrate. The Mg(2+) site is built by N230, S234, and E238.

This sequence belongs to the terpene synthase family. Mg(2+) serves as cofactor.

It catalyses the reaction (2E,6E)-farnesyl diphosphate + H2O = (+)-corvol ether B + diphosphate. The enzyme catalyses (2E,6E)-farnesyl diphosphate + H2O = (+)-corvol ether A + diphosphate. Terpene synthase that catalyzes the conversion of (2E,6E)-farnesyl diphosphate (FPP) into sesquiterpenes which are important for fungi-environment interactions. Produces a mixture consisting of 8 sesquiterpenes including corvol ethers A and B, as well as traces of epizonarene, gamma-cadinene, delta-cadinene, alpha-cadinene, alpha-cadinol, and an unidentified sesquiterpene. The major product is corvol ether B. The sequence is that of Sesquiterpene synthase MBR_10393 from Metarhizium brunneum (strain ARSEF 3297).